The sequence spans 344 residues: Beta-1,4-galactosyltransferase 4 (344 aa).

Topologically, residues 1 to 12 (MGFNLTFHLSYK) are cytoplasmic. A helical; Signal-anchor for type II membrane protein membrane pass occupies residues 13 to 38 (FRLLLLLTLCLTVVGWATSNYFVGAI). Residues 39–344 (QEIPKAKEFM…NITVDFWFGA (306 aa)) lie on the Lumenal side of the membrane. The cysteines at positions 77 and 118 are disulfide-linked. UDP-alpha-D-galactose-binding positions include 129 to 133 (PHRNR), 168 to 170 (FNR), and 195 to 196 (VD). The cysteines at positions 189 and 208 are disulfide-linked. Position 196 (Asp196) interacts with Mn(2+). Asn220 carries an N-linked (GlcNAc...) asparagine glycan. Residues Tyr224 and Trp256 each coordinate UDP-alpha-D-galactose. 258–261 (GEDD) provides a ligand contact to N-acetyl-D-glucosamine. His289 is a binding site for Mn(2+). Position 289–291 (289–291 (HTR)) interacts with UDP-alpha-D-galactose. Arg301 provides a ligand contact to N-acetyl-D-glucosamine. Asn335 carries an N-linked (GlcNAc...) asparagine glycan.

Belongs to the glycosyltransferase 7 family. In terms of assembly, interacts with SLC35A2 (isoform 2; UGT1). Mn(2+) is required as a cofactor. N-glycosylated. Highest expression is observed in placenta, pancreas, kidney and heart. Expressed in corneal epithelial cells.

The protein localises to the golgi apparatus membrane. It localises to the secreted. The enzyme catalyses N-acetyl-D-glucosamine + UDP-alpha-D-galactose = beta-D-galactosyl-(1-&gt;4)-N-acetyl-D-glucosamine + UDP + H(+). The catalysed reaction is a beta-D-GlcNAc-(1-&gt;3)-beta-D-Gal-(1-&gt;4)-beta-D-Glc-(1&lt;-&gt;1)-Cer(d18:1(4E)) + UDP-alpha-D-galactose = a neolactoside nLc4Cer(d18:1(4E)) + UDP + H(+). It catalyses the reaction 3-O-{beta-D-galactosyl-(1-&gt;3)-[6-O-sulfo-N-acetyl-beta-D-glucosaminyl-(1-&gt;6)]-N-acetyl-alpha-D-galactosaminyl}-L-seryl-[protein] + UDP-alpha-D-galactose = 3-O-{beta-D-galactosyl-(1-&gt;3)-[beta-D-galactosyl-(1-&gt;4)-6-O-sulfo-N-acetyl-beta-D-glucosaminyl-(1-&gt;6)]-N-acetyl-alpha-D-galactosaminyl}-L-seryl-[protein] + UDP + H(+). It carries out the reaction 3-O-{beta-D-galactosyl-(1-&gt;3)-[6-O-sulfo-N-acetyl-beta-D-glucosaminyl-(1-&gt;6)]-N-acetyl-alpha-D-galactosaminyl}-L-threonyl-[protein] + UDP-alpha-D-galactose = 3-O-{beta-D-galactosyl-(1-&gt;3)-[beta-D-galactosyl-(1-&gt;4)-6-O-sulfo-N-acetyl-beta-D-glucosaminyl-(1-&gt;6)]-N-acetyl-alpha-D-galactosaminyl}-L-threonyl-[protein] + UDP + H(+). The protein operates within protein modification; protein glycosylation. It functions in the pathway glycolipid biosynthesis. Up-regulated by LALBA. In terms of biological role, galactose (Gal) transferase involved in the synthesis of terminal N-acetyllactosamine (LacNac) unit present on glycan chains of glycoproteins and glycosphingolipids. Catalyzes the transfer of Gal residue via a beta1-&gt;4 linkage from UDP-Gal to the non-reducing terminal N-acetyl glucosamine 6-O-sulfate (6-O-sulfoGlcNAc) in the linearly growing chain of both N- and O-linked keratan sulfate proteoglycans. Cooperates with B3GNT7 N-acetyl glucosamine transferase and CHST6 and CHST1 sulfotransferases to construct and elongate mono- and disulfated disaccharide units [-&gt;3Galbeta1-&gt;4(6-sulfoGlcNAcbeta)1-&gt;] and [-&gt;3(6-sulfoGalbeta)1-&gt;4(6-sulfoGlcNAcbeta)1-&gt;] within keratan sulfate polymer. Transfers Gal residue via a beta1-&gt;4 linkage to terminal 6-O-sulfoGlcNAc within the LacNac unit of core 2 O-glycans forming 6-sulfo-sialyl-Lewis X (sLex). May contribute to the generation of sLex epitope on mucin-type glycoproteins that serve as ligands for SELL/L-selectin, a major regulator of leukocyte migration. In the biosynthesis pathway of neolacto-series glycosphingolipids, transfers Gal residue via a beta1-&gt;4 linkage to terminal GlcNAc of a lactotriaosylceramide (Lc3Cer) acceptor to form a neolactotetraosylceramide. The sequence is that of Beta-1,4-galactosyltransferase 4 from Homo sapiens (Human).